Here is a 340-residue protein sequence, read N- to C-terminus: Sideroflexin-5 (340 aa).

4 consecutive transmembrane segments (helical) span residues 103 to 123 (IFMPFRMSGYIPFGTPIVVGL), 163 to 183 (FIQGYLGAVISAVSIAVGLNV), 254 to 274 (LTRVVLPMPILVLPPIVMSML), and 287 to 307 (LLPVQSLVCLAAFGLALPLAI).

It belongs to the sideroflexin family. As to expression, primarily expressed in the brain.

The protein localises to the mitochondrion inner membrane. The enzyme catalyses citrate(in) = citrate(out). Mitochondrial amino-acid transporter. Transports citrate. Does not act as a serine transporter: not able to mediate transport of serine into mitochondria. In brown adipose tissue, plays a role in the regulation of UCP1-dependent thermogenesis probably by supporting mitochondrial glycerol-3-phosphate utilization. The chain is Sideroflexin-5 from Homo sapiens (Human).